The primary structure comprises 162 residues: 2-amino-4-hydroxy-6-hydroxymethyldihydropteridine pyrophosphokinase (162 aa).

It belongs to the HPPK family.

It carries out the reaction 6-hydroxymethyl-7,8-dihydropterin + ATP = (7,8-dihydropterin-6-yl)methyl diphosphate + AMP + H(+). It participates in cofactor biosynthesis; tetrahydrofolate biosynthesis; 2-amino-4-hydroxy-6-hydroxymethyl-7,8-dihydropteridine diphosphate from 7,8-dihydroneopterin triphosphate: step 4/4. Catalyzes the transfer of pyrophosphate from adenosine triphosphate (ATP) to 6-hydroxymethyl-7,8-dihydropterin, an enzymatic step in folate biosynthesis pathway. The sequence is that of 2-amino-4-hydroxy-6-hydroxymethyldihydropteridine pyrophosphokinase (folK) from Streptococcus pyogenes serotype M3 (strain ATCC BAA-595 / MGAS315).